Consider the following 691-residue polypeptide: ATP-dependent RNA helicase MRH4, mitochondrial (691 aa).

Residues 1 to 31 (MLIGQVSRLSAIPPLALQHTLRPLHSSSVLA) constitute a mitochondrion transit peptide. A disordered region spans residues 31–148 (AAGGKRPKQS…ATMPPNLTPR (118 aa)). A compositionally biased stretch (polar residues) spans 39-49 (QSPSHSRNSPR). Over residues 50–68 (QKPDWEKRGSNRGRSEQPR) the composition is skewed to basic and acidic residues. Residues 94–103 (SDSSSGSSAS) show a composition bias toward low complexity. The segment covering 111 to 126 (VPTSSRRLLPFSSSDT) has biased composition (polar residues). A Q motif motif is present at residues 183 to 213 (RTFDDFGLEEGLVKSLKGLYGEDGKTTPIET). In terms of domain architecture, Helicase ATP-binding spans 225-433 (ASAPIGSQRV…TTNPFFTKKE (209 aa)). 238 to 245 (AETGSGKT) contacts ATP. Positions 382–385 (DEAD) match the DEAD box motif. One can recognise a Helicase C-terminal domain in the interval 474–691 (TLAEDAKAAK…VGAMGKRVRT (218 aa)). Residues 644-667 (LGEGAKNNKGGKGQGPLKKDGKTA) form a disordered region.

It belongs to the DEAD box helicase family. MRH4 subfamily.

Its subcellular location is the mitochondrion. It catalyses the reaction ATP + H2O = ADP + phosphate + H(+). Its function is as follows. ATP-binding RNA helicase involved in mitochondrial RNA metabolism. Required for maintenance of mitochondrial DNA. In Cryptococcus neoformans var. neoformans serotype D (strain JEC21 / ATCC MYA-565) (Filobasidiella neoformans), this protein is ATP-dependent RNA helicase MRH4, mitochondrial (MRH4).